A 421-amino-acid chain; its full sequence is Tyrosine--tRNA ligase (421 aa).

Residue tyrosine 42 coordinates L-tyrosine. A 'HIGH' region motif is present at residues 47 to 56; that stretch reads CTAPSLHVGS. The L-tyrosine site is built by tyrosine 179 and glutamine 183. The 'KMSKS' region motif lies at 239-243; sequence KMGKT. Lysine 242 is a binding site for ATP. The 66-residue stretch at 354–419 folds into the S4 RNA-binding domain; sequence LGILAAFAKA…RKKHVLLRLA (66 aa).

The protein belongs to the class-I aminoacyl-tRNA synthetase family. TyrS type 1 subfamily. In terms of assembly, homodimer.

Its subcellular location is the cytoplasm. The catalysed reaction is tRNA(Tyr) + L-tyrosine + ATP = L-tyrosyl-tRNA(Tyr) + AMP + diphosphate + H(+). Functionally, catalyzes the attachment of tyrosine to tRNA(Tyr) in a two-step reaction: tyrosine is first activated by ATP to form Tyr-AMP and then transferred to the acceptor end of tRNA(Tyr). The sequence is that of Tyrosine--tRNA ligase from Beijerinckia indica subsp. indica (strain ATCC 9039 / DSM 1715 / NCIMB 8712).